The following is a 196-amino-acid chain: Blue copper protein (196 aa).

Residues 1–22 form the signal peptide; it reads MAGVFKTVTFLVLVFAAVVVFA. Positions 23–125 constitute a Phytocyanin domain; the sequence is EDYDVGDDTE…GQKLSITVVA (103 aa). His66 contacts Cu cation. A disulfide bridge connects residues Cys79 and Cys113. N-linked (GlcNAc...) asparagine glycosylation occurs at Asn98. Cu cation is bound by residues Cys107, His112, and Gln117. The tract at residues 133–173 is disordered; that stretch reads TPGAGATPAPGSTPSTGGTTPPTAGGTTTPSGSSGTTTPAG. Positions 135 to 173 are enriched in low complexity; sequence GAGATPAPGSTPSTGGTTPPTAGGTTTPSGSSGTTTPAG. Residue Asn174 is the site of GPI-anchor amidated asparagine attachment. Residues 175 to 196 constitute a propeptide, removed in mature form; sequence AASSLGGATFLVAFVSAVVALF.

The protein localises to the cell membrane. Its function is as follows. Probably acts as an electron carrier. The chain is Blue copper protein (BCB) from Arabidopsis thaliana (Mouse-ear cress).